Reading from the N-terminus, the 398-residue chain is MITDVWKYRGKSTGELRSSVCYAIKTGVFDYAKQFPSSRNLEKFGEARQDLTIKELAEKFLALKETEVAKTSLNTYRAVIKNILSIIGEKNLASSINKEKLLEVRKELLTGYQIPKSNYIVTQPGRSAVTVNNYMTNLNAVFQFGVDNGYLADNPFKGISPLKESRTIPDPLSREEFIRLIDACRNQQAKNLWCVSVYTGVRPGELCALGWEDIDLKNGTMMIRRNLAKDRFTVPKTQAGTNRVIHLIKPAIDALRSQMTLTRLSKEHIIDVHFREYGRTEKQKCTFVFQPEVSARVKNYGDHFTVDSIRQMWDAAIKRAGLRHRKSYQSRHTYACWSLTAGANPAFIANQMGHADAQMVFQVYGKWMSENNNAQVALLNTQLSEFAPTMPHNEAMKN.

Residues 51 to 146 (LTIKELAEKF…NLNAVFQFGV (96 aa)) enclose the Core-binding (CB) domain. In terms of domain architecture, Tyr recombinase spans 167-378 (TIPDPLSREE…SENNNAQVAL (212 aa)). Residues arginine 202, lysine 236, arginine 331, and histidine 354 contribute to the active site. The active-site O-(3'-phospho-DNA)-tyrosine intermediate is the tyrosine 364.

The protein belongs to the 'phage' integrase family.

Functionally, integrase is necessary for integration of the phage into the host genome by site-specific recombination. In conjunction with excisionase, integrase is also necessary for excision of the prophage from the host genome. This chain is Putative defective protein IntQ (intQ), found in Escherichia coli (strain K12).